Reading from the N-terminus, the 658-residue chain is Protein kinase and PP2C-like domain-containing protein (658 aa).

Residues 30-314 (FTLLSPIAKG…DNVVLELESI (285 aa)) form the Protein kinase domain. ATP is bound by residues 36 to 44 (IAKGSESVV) and Lys-57. Asp-149 (proton acceptor) is an active-site residue. Positions 392–648 (SCGSFATCGR…DNITVIVVFL (257 aa)) constitute a PPM-type phosphatase domain. Residues Asp-428, Gly-429, Asp-599, and Asp-639 each coordinate Mn(2+).

It in the N-terminal section; belongs to the protein kinase superfamily. Ser/Thr protein kinase family. In the C-terminal section; belongs to the PP2C family. Mg(2+) serves as cofactor. Mn(2+) is required as a cofactor.

The enzyme catalyses L-seryl-[protein] + ATP = O-phospho-L-seryl-[protein] + ADP + H(+). It catalyses the reaction L-threonyl-[protein] + ATP = O-phospho-L-threonyl-[protein] + ADP + H(+). It carries out the reaction O-phospho-L-seryl-[protein] + H2O = L-seryl-[protein] + phosphate. The catalysed reaction is O-phospho-L-threonyl-[protein] + H2O = L-threonyl-[protein] + phosphate. This chain is Protein kinase and PP2C-like domain-containing protein, found in Arabidopsis thaliana (Mouse-ear cress).